The following is a 272-amino-acid chain: 4-hydroxy-tetrahydrodipicolinate reductase (272 aa).

12–17 (GALGKM) provides a ligand contact to NAD(+). An NADP(+)-binding site is contributed by Lys-39. NAD(+) is bound by residues 102–104 (GTT) and 126–129 (SSNY). The active-site Proton donor/acceptor is His-159. His-160 lines the (S)-2,3,4,5-tetrahydrodipicolinate pocket. Lys-163 functions as the Proton donor in the catalytic mechanism. A (S)-2,3,4,5-tetrahydrodipicolinate-binding site is contributed by 169-170 (GT).

The protein belongs to the DapB family. Homotetramer.

It localises to the cytoplasm. It carries out the reaction (S)-2,3,4,5-tetrahydrodipicolinate + NAD(+) + H2O = (2S,4S)-4-hydroxy-2,3,4,5-tetrahydrodipicolinate + NADH + H(+). It catalyses the reaction (S)-2,3,4,5-tetrahydrodipicolinate + NADP(+) + H2O = (2S,4S)-4-hydroxy-2,3,4,5-tetrahydrodipicolinate + NADPH + H(+). It functions in the pathway amino-acid biosynthesis; L-lysine biosynthesis via DAP pathway; (S)-tetrahydrodipicolinate from L-aspartate: step 4/4. Functionally, catalyzes the conversion of 4-hydroxy-tetrahydrodipicolinate (HTPA) to tetrahydrodipicolinate. This chain is 4-hydroxy-tetrahydrodipicolinate reductase, found in Buchnera aphidicola subsp. Baizongia pistaciae (strain Bp).